A 139-amino-acid chain; its full sequence is MKKGTVLNSEISSVISRLGHTDTLVVCDAGLPIPNSAARIDMALTQGVPSFMQVVDVVTREMQVEAAILATEIKQQNPQLHETLLTHLEQLQQYQGNTIKISYTTHEQFKKLTADSQAVIRSGECSPYANVILCAGVTF.

Residue His-20 is the Proton donor of the active site. Substrate-binding positions include Asp-28, His-106, and 128 to 130; that span reads YAN.

It belongs to the RbsD / FucU family. RbsD subfamily. In terms of assembly, homodecamer.

It localises to the cytoplasm. The catalysed reaction is beta-D-ribopyranose = beta-D-ribofuranose. The protein operates within carbohydrate metabolism; D-ribose degradation; D-ribose 5-phosphate from beta-D-ribopyranose: step 1/2. In terms of biological role, catalyzes the interconversion of beta-pyran and beta-furan forms of D-ribose. In Salmonella arizonae (strain ATCC BAA-731 / CDC346-86 / RSK2980), this protein is D-ribose pyranase.